Consider the following 476-residue polypeptide: Sulfate adenylyltransferase subunit 1 (476 aa).

The region spanning 25-241 (KSLLRFLTCG…LETVEVQRVV (217 aa)) is the tr-type G domain. The tract at residues 34 to 41 (GSVDDGKS) is G1. 34–41 (GSVDDGKS) lines the GTP pocket. Residues 92–96 (GITID) form a G2 region. The G3 stretch occupies residues 113-116 (DTPG). GTP-binding positions include 113–117 (DTPGH) and 168–171 (NKMD). The tract at residues 168–171 (NKMD) is G4. Residues 206 to 208 (SAL) form a G5 region.

The protein belongs to the TRAFAC class translation factor GTPase superfamily. Classic translation factor GTPase family. CysN/NodQ subfamily. In terms of assembly, heterodimer composed of CysD, the smaller subunit, and CysN.

It catalyses the reaction sulfate + ATP + H(+) = adenosine 5'-phosphosulfate + diphosphate. Its pathway is sulfur metabolism; hydrogen sulfide biosynthesis; sulfite from sulfate: step 1/3. Its function is as follows. With CysD forms the ATP sulfurylase (ATPS) that catalyzes the adenylation of sulfate producing adenosine 5'-phosphosulfate (APS) and diphosphate, the first enzymatic step in sulfur assimilation pathway. APS synthesis involves the formation of a high-energy phosphoric-sulfuric acid anhydride bond driven by GTP hydrolysis by CysN coupled to ATP hydrolysis by CysD. The chain is Sulfate adenylyltransferase subunit 1 from Erwinia tasmaniensis (strain DSM 17950 / CFBP 7177 / CIP 109463 / NCPPB 4357 / Et1/99).